A 325-amino-acid polypeptide reads, in one-letter code: Elongation factor P--(R)-beta-lysine ligase (325 aa).

76–78 is a substrate binding site; sequence SPE. ATP is bound by residues 100 to 102 and asparagine 109; that span reads RNE. Tyrosine 118 contacts substrate. 244–245 is an ATP binding site; the sequence is EL. Glutamate 251 contacts substrate. Glycine 300 is a binding site for ATP.

This sequence belongs to the class-II aminoacyl-tRNA synthetase family. EpmA subfamily. In terms of assembly, homodimer.

The catalysed reaction is D-beta-lysine + L-lysyl-[protein] + ATP = N(6)-((3R)-3,6-diaminohexanoyl)-L-lysyl-[protein] + AMP + diphosphate + H(+). Its function is as follows. With EpmB is involved in the beta-lysylation step of the post-translational modification of translation elongation factor P (EF-P). Catalyzes the ATP-dependent activation of (R)-beta-lysine produced by EpmB, forming a lysyl-adenylate, from which the beta-lysyl moiety is then transferred to the epsilon-amino group of a conserved specific lysine residue in EF-P. The sequence is that of Elongation factor P--(R)-beta-lysine ligase from Pectobacterium atrosepticum (strain SCRI 1043 / ATCC BAA-672) (Erwinia carotovora subsp. atroseptica).